The following is a 379-amino-acid chain: Eukaryotic translation initiation factor 3 subunit M (379 aa).

Positions 179 to 341 (RSEEASKVMI…RKVIISSVAQ (163 aa)) constitute a PCI domain.

Belongs to the eIF-3 subunit M family. As to quaternary structure, component of the eukaryotic translation initiation factor 3 (eIF-3) complex.

The protein localises to the cytoplasm. Component of the eukaryotic translation initiation factor 3 (eIF-3) complex, which is involved in protein synthesis of a specialized repertoire of mRNAs and, together with other initiation factors, stimulates binding of mRNA and methionyl-tRNAi to the 40S ribosome. The eIF-3 complex specifically targets and initiates translation of a subset of mRNAs involved in cell proliferation. In Nematostella vectensis (Starlet sea anemone), this protein is Eukaryotic translation initiation factor 3 subunit M.